The primary structure comprises 432 residues: Adenylosuccinate synthetase (432 aa).

Residues 12–18 (GDEGKGK) and 40–42 (GHT) each bind GTP. D13 functions as the Proton acceptor in the catalytic mechanism. Residues D13 and G40 each contribute to the Mg(2+) site. IMP-binding positions include 13-16 (DEGK), 38-41 (NAGH), T132, R146, Q226, T241, and R305. Residue H41 is the Proton donor of the active site. A substrate-binding site is contributed by 301-307 (TVTGRKR). GTP is bound by residues R307, 333-335 (KLD), and 415-417 (STS).

The protein belongs to the adenylosuccinate synthetase family. Homodimer. Mg(2+) is required as a cofactor.

It localises to the cytoplasm. The catalysed reaction is IMP + L-aspartate + GTP = N(6)-(1,2-dicarboxyethyl)-AMP + GDP + phosphate + 2 H(+). It functions in the pathway purine metabolism; AMP biosynthesis via de novo pathway; AMP from IMP: step 1/2. Functionally, plays an important role in the de novo pathway of purine nucleotide biosynthesis. Catalyzes the first committed step in the biosynthesis of AMP from IMP. The polypeptide is Adenylosuccinate synthetase (Allorhizobium ampelinum (strain ATCC BAA-846 / DSM 112012 / S4) (Agrobacterium vitis (strain S4))).